The primary structure comprises 307 residues: Pantothenate kinase (307 aa).

Position 90 to 97 (90 to 97 (GSVAVGKS)) interacts with ATP.

The protein belongs to the prokaryotic pantothenate kinase family.

The protein localises to the cytoplasm. It carries out the reaction (R)-pantothenate + ATP = (R)-4'-phosphopantothenate + ADP + H(+). It functions in the pathway cofactor biosynthesis; coenzyme A biosynthesis; CoA from (R)-pantothenate: step 1/5. This chain is Pantothenate kinase, found in Limosilactobacillus fermentum (strain NBRC 3956 / LMG 18251) (Lactobacillus fermentum).